The sequence spans 494 residues: Glutamyl-tRNA(Gln) amidotransferase subunit A (494 aa).

Catalysis depends on charge relay system residues Lys-80 and Ser-155. Catalysis depends on Ser-179, which acts as the Acyl-ester intermediate.

It belongs to the amidase family. GatA subfamily. Heterotrimer of A, B and C subunits.

The catalysed reaction is L-glutamyl-tRNA(Gln) + L-glutamine + ATP + H2O = L-glutaminyl-tRNA(Gln) + L-glutamate + ADP + phosphate + H(+). Functionally, allows the formation of correctly charged Gln-tRNA(Gln) through the transamidation of misacylated Glu-tRNA(Gln) in organisms which lack glutaminyl-tRNA synthetase. The reaction takes place in the presence of glutamine and ATP through an activated gamma-phospho-Glu-tRNA(Gln). The chain is Glutamyl-tRNA(Gln) amidotransferase subunit A from Lachnoclostridium phytofermentans (strain ATCC 700394 / DSM 18823 / ISDg) (Clostridium phytofermentans).